The chain runs to 198 residues: dCTP deaminase, dUMP-forming (198 aa).

Residues 115–120 (KSSIAR), Asp133, 141–143 (TLE), Gln162, Tyr175, and Lys184 contribute to the dCTP site. The active-site Proton donor/acceptor is Glu143.

Belongs to the dCTP deaminase family. In terms of assembly, homotrimer.

It carries out the reaction dCTP + 2 H2O = dUMP + NH4(+) + diphosphate. It functions in the pathway pyrimidine metabolism; dUMP biosynthesis; dUMP from dCTP: step 1/1. Its function is as follows. Bifunctional enzyme that catalyzes both the deamination of dCTP to dUTP and the hydrolysis of dUTP to dUMP without releasing the toxic dUTP intermediate. The chain is dCTP deaminase, dUMP-forming from Nanoarchaeum equitans (strain Kin4-M).